The chain runs to 301 residues: Homoserine O-acetyltransferase (301 aa).

The active-site Acyl-thioester intermediate is Cys142. Residues Lys163 and Ser192 each contribute to the substrate site. His235 (proton acceptor) is an active-site residue. The active site involves Glu237. Arg249 contacts substrate.

The protein belongs to the MetA family.

It is found in the cytoplasm. It catalyses the reaction L-homoserine + acetyl-CoA = O-acetyl-L-homoserine + CoA. Its pathway is amino-acid biosynthesis; L-methionine biosynthesis via de novo pathway; O-acetyl-L-homoserine from L-homoserine: step 1/1. Functionally, transfers an acetyl group from acetyl-CoA to L-homoserine, forming acetyl-L-homoserine. The chain is Homoserine O-acetyltransferase from Novosphingobium aromaticivorans (strain ATCC 700278 / DSM 12444 / CCUG 56034 / CIP 105152 / NBRC 16084 / F199).